The primary structure comprises 382 residues: Succinyl-diaminopimelate desuccinylase (382 aa).

H68 serves as a coordination point for Zn(2+). D70 is a catalytic residue. D101 serves as a coordination point for Zn(2+). The active-site Proton acceptor is the E135. Zn(2+) contacts are provided by E136, E164, and H350.

The protein belongs to the peptidase M20A family. DapE subfamily. Homodimer. Zn(2+) is required as a cofactor. The cofactor is Co(2+).

The enzyme catalyses N-succinyl-(2S,6S)-2,6-diaminopimelate + H2O = (2S,6S)-2,6-diaminopimelate + succinate. The protein operates within amino-acid biosynthesis; L-lysine biosynthesis via DAP pathway; LL-2,6-diaminopimelate from (S)-tetrahydrodipicolinate (succinylase route): step 3/3. In terms of biological role, catalyzes the hydrolysis of N-succinyl-L,L-diaminopimelic acid (SDAP), forming succinate and LL-2,6-diaminopimelate (DAP), an intermediate involved in the bacterial biosynthesis of lysine and meso-diaminopimelic acid, an essential component of bacterial cell walls. This is Succinyl-diaminopimelate desuccinylase from Acidithiobacillus ferrooxidans (strain ATCC 23270 / DSM 14882 / CIP 104768 / NCIMB 8455) (Ferrobacillus ferrooxidans (strain ATCC 23270)).